The chain runs to 375 residues: Protein RecA (375 aa).

Position 75–82 (75–82 (GPESSGKT)) interacts with ATP. The segment at 339–375 (GPYAKMKDEQTEEAAGDQMDEDKPIDLSPNFDDDDAN) is disordered. A compositionally biased stretch (acidic residues) spans 348–358 (QTEEAAGDQMD).

The protein belongs to the RecA family.

It localises to the cytoplasm. Functionally, can catalyze the hydrolysis of ATP in the presence of single-stranded DNA, the ATP-dependent uptake of single-stranded DNA by duplex DNA, and the ATP-dependent hybridization of homologous single-stranded DNAs. It interacts with LexA causing its activation and leading to its autocatalytic cleavage. The polypeptide is Protein RecA (Corynebacterium jeikeium (strain K411)).